The following is a 463-amino-acid chain: Asparagine--tRNA ligase (463 aa).

This sequence belongs to the class-II aminoacyl-tRNA synthetase family. In terms of assembly, homodimer.

It localises to the cytoplasm. It catalyses the reaction tRNA(Asn) + L-asparagine + ATP = L-asparaginyl-tRNA(Asn) + AMP + diphosphate + H(+). This chain is Asparagine--tRNA ligase, found in Clostridium tetani (strain Massachusetts / E88).